The primary structure comprises 122 residues: ATP-dependent Clp protease adapter protein ClpS (122 aa).

The tract at residues 1-33 (MHAPSQIRLTFNQDHPEPHEHEDEGAGLAVQES) is disordered. Positions 14-24 (DHPEPHEHEDE) are enriched in basic and acidic residues.

The protein belongs to the ClpS family. In terms of assembly, binds to the N-terminal domain of the chaperone ClpA.

Involved in the modulation of the specificity of the ClpAP-mediated ATP-dependent protein degradation. The polypeptide is ATP-dependent Clp protease adapter protein ClpS (Pseudomonas aeruginosa (strain ATCC 15692 / DSM 22644 / CIP 104116 / JCM 14847 / LMG 12228 / 1C / PRS 101 / PAO1)).